The chain runs to 573 residues: Sulfite reductase [NADPH] hemoprotein beta-component (573 aa).

A disordered region spans residues 1–20 (MAKVELKAPDGPPSDVERIK). [4Fe-4S] cluster-binding residues include Cys-438, Cys-444, Cys-483, and Cys-487. Residue Cys-487 participates in siroheme binding.

This sequence belongs to the nitrite and sulfite reductase 4Fe-4S domain family. Alpha(8)-beta(8). The alpha component is a flavoprotein, the beta component is a hemoprotein. Requires siroheme as cofactor. [4Fe-4S] cluster serves as cofactor.

The catalysed reaction is hydrogen sulfide + 3 NADP(+) + 3 H2O = sulfite + 3 NADPH + 4 H(+). Its pathway is sulfur metabolism; hydrogen sulfide biosynthesis; hydrogen sulfide from sulfite (NADPH route): step 1/1. Its function is as follows. Component of the sulfite reductase complex that catalyzes the 6-electron reduction of sulfite to sulfide. This is one of several activities required for the biosynthesis of L-cysteine from sulfate. In Geobacillus kaustophilus (strain HTA426), this protein is Sulfite reductase [NADPH] hemoprotein beta-component.